We begin with the raw amino-acid sequence, 338 residues long: Heat-inducible transcription repressor HrcA (338 aa).

Belongs to the HrcA family.

Its function is as follows. Negative regulator of class I heat shock genes (grpE-dnaK-dnaJ and groELS operons). Prevents heat-shock induction of these operons. This chain is Heat-inducible transcription repressor HrcA, found in Thermotoga sp. (strain RQ2).